A 398-amino-acid chain; its full sequence is CCA-adding enzyme (398 aa).

Residues Gly-32 and Arg-35 each coordinate ATP. CTP-binding residues include Gly-32 and Arg-35. Residues Asp-45 and Asp-47 each coordinate Mg(2+). 5 residues coordinate ATP: Arg-116, Asp-159, Arg-162, Arg-165, and Arg-168. 5 residues coordinate CTP: Arg-116, Asp-159, Arg-162, Arg-165, and Arg-168.

It belongs to the tRNA nucleotidyltransferase/poly(A) polymerase family. Bacterial CCA-adding enzyme type 3 subfamily. As to quaternary structure, homodimer. It depends on Mg(2+) as a cofactor.

It catalyses the reaction a tRNA precursor + 2 CTP + ATP = a tRNA with a 3' CCA end + 3 diphosphate. The catalysed reaction is a tRNA with a 3' CCA end + 2 CTP + ATP = a tRNA with a 3' CCACCA end + 3 diphosphate. Its function is as follows. Catalyzes the addition and repair of the essential 3'-terminal CCA sequence in tRNAs without using a nucleic acid template. Adds these three nucleotides in the order of C, C, and A to the tRNA nucleotide-73, using CTP and ATP as substrates and producing inorganic pyrophosphate. tRNA 3'-terminal CCA addition is required both for tRNA processing and repair. Also involved in tRNA surveillance by mediating tandem CCA addition to generate a CCACCA at the 3' terminus of unstable tRNAs. While stable tRNAs receive only 3'-terminal CCA, unstable tRNAs are marked with CCACCA and rapidly degraded. This is CCA-adding enzyme from Lactobacillus johnsonii (strain CNCM I-12250 / La1 / NCC 533).